We begin with the raw amino-acid sequence, 241 residues long: 3-deoxy-D-manno-octulosonic acid kinase (241 aa).

D171 is an active-site residue.

It belongs to the protein kinase superfamily. KdkA/RfaP family.

The protein localises to the cell inner membrane. It catalyses the reaction an alpha-Kdo-(2-&gt;6)-lipid IVA + ATP = a 4-O-phospho-alpha-Kdo-(2-&gt;6)-lipid IVA + ADP + H(+). The protein operates within bacterial outer membrane biogenesis; LPS core biosynthesis. Functionally, catalyzes the ATP-dependent phosphorylation of the 3-deoxy-D-manno-octulosonic acid (Kdo) residue in Kdo-lipid IV(A) at the 4-OH position. In Haemophilus influenzae (strain 86-028NP), this protein is 3-deoxy-D-manno-octulosonic acid kinase.